The sequence spans 322 residues: Cytochrome c biogenesis protein CcsA (322 aa).

7 helical membrane passes run Ile9–Leu29, Gly43–Gly63, Leu70–Ile90, Met142–Ile162, Val226–Asn246, Glu259–His274, and Ala287–Leu307.

The protein belongs to the CcmF/CycK/Ccl1/NrfE/CcsA family. May interact with Ccs1.

Its subcellular location is the plastid. The protein resides in the chloroplast thylakoid membrane. Its function is as follows. Required during biogenesis of c-type cytochromes (cytochrome c6 and cytochrome f) at the step of heme attachment. The sequence is that of Cytochrome c biogenesis protein CcsA from Chloranthus spicatus (Chulantree).